Here is a 345-residue protein sequence, read N- to C-terminus: Ferredoxin--NADP reductase (345 aa).

FAD contacts are provided by aspartate 38, glutamine 46, tyrosine 51, valine 91, phenylalanine 129, aspartate 295, and threonine 336.

This sequence belongs to the ferredoxin--NADP reductase type 2 family. As to quaternary structure, homodimer. It depends on FAD as a cofactor.

It carries out the reaction 2 reduced [2Fe-2S]-[ferredoxin] + NADP(+) + H(+) = 2 oxidized [2Fe-2S]-[ferredoxin] + NADPH. This chain is Ferredoxin--NADP reductase, found in Rhodospirillum rubrum (strain ATCC 11170 / ATH 1.1.1 / DSM 467 / LMG 4362 / NCIMB 8255 / S1).